The primary structure comprises 36 residues: NERHVTCFYVKFGCKHTECITTIVFCWQTASDISSV.

The propeptide occupies 1–2 (NE).

Post-translationally, contains 2 disulfide bond. As to expression, expressed by the venom duct.

The protein localises to the secreted. The chain is Conotoxin Cl14.10 from Californiconus californicus (California cone).